The chain runs to 207 residues: rRNA N(6)-adenosine-methyltransferase METTL5 (207 aa).

S-adenosyl-L-methionine contacts are provided by residues Gln-25, Thr-28, Gly-56, Cys-59, Val-61, Asp-78, and 105–106; that span reads DV.

It belongs to the methyltransferase superfamily. PrmA family.

Its subcellular location is the nucleus. It localises to the presynapse. The protein localises to the postsynapse. The enzyme catalyses adenosine(1832) in 18S rRNA + S-adenosyl-L-methionine = N(6)-methyladenosine(1832) in 18S rRNA + S-adenosyl-L-homocysteine + H(+). RRNA N6-adenosine-methyltransferase activity is inhibited by zinc. Functionally, catalytic subunit of a heterodimer with TRMT112, which specifically methylates the 6th position of adenine in position 1832 of 18S rRNA. N6-methylation of adenine(1832) in 18S rRNA resides in the decoding center of 18S rRNA and is required for translation and embryonic stem cells (ESCs) pluripotency and differentiation. In Danio rerio (Zebrafish), this protein is rRNA N(6)-adenosine-methyltransferase METTL5.